The sequence spans 139 residues: D-ribose pyranase (139 aa).

His-20 (proton donor) is an active-site residue. Residues Asp-28, His-106, and 128 to 130 (YAN) contribute to the substrate site.

The protein belongs to the RbsD / FucU family. RbsD subfamily. In terms of assembly, homodecamer.

The protein resides in the cytoplasm. It catalyses the reaction beta-D-ribopyranose = beta-D-ribofuranose. Its pathway is carbohydrate metabolism; D-ribose degradation; D-ribose 5-phosphate from beta-D-ribopyranose: step 1/2. Its function is as follows. Catalyzes the interconversion of beta-pyran and beta-furan forms of D-ribose. This is D-ribose pyranase from Shewanella pealeana (strain ATCC 700345 / ANG-SQ1).